Here is a 231-residue protein sequence, read N- to C-terminus: Phosphatidylserine decarboxylase proenzyme (231 aa).

Serine 188 acts as the Schiff-base intermediate with substrate; via pyruvic acid in catalysis. Pyruvic acid (Ser); by autocatalysis is present on serine 188.

The protein belongs to the phosphatidylserine decarboxylase family. PSD-A subfamily. Heterodimer of a large membrane-associated beta subunit and a small pyruvoyl-containing alpha subunit. Pyruvate serves as cofactor. Is synthesized initially as an inactive proenzyme. Formation of the active enzyme involves a self-maturation process in which the active site pyruvoyl group is generated from an internal serine residue via an autocatalytic post-translational modification. Two non-identical subunits are generated from the proenzyme in this reaction, and the pyruvate is formed at the N-terminus of the alpha chain, which is derived from the carboxyl end of the proenzyme. The post-translation cleavage follows an unusual pathway, termed non-hydrolytic serinolysis, in which the side chain hydroxyl group of the serine supplies its oxygen atom to form the C-terminus of the beta chain, while the remainder of the serine residue undergoes an oxidative deamination to produce ammonia and the pyruvoyl prosthetic group on the alpha chain.

The protein resides in the cell membrane. It catalyses the reaction a 1,2-diacyl-sn-glycero-3-phospho-L-serine + H(+) = a 1,2-diacyl-sn-glycero-3-phosphoethanolamine + CO2. Its pathway is phospholipid metabolism; phosphatidylethanolamine biosynthesis; phosphatidylethanolamine from CDP-diacylglycerol: step 2/2. Catalyzes the formation of phosphatidylethanolamine (PtdEtn) from phosphatidylserine (PtdSer). The polypeptide is Phosphatidylserine decarboxylase proenzyme (Rickettsia prowazekii (strain Madrid E)).